The primary structure comprises 591 residues: UvrABC system protein C (591 aa).

The region spanning 14–91 (DQPGCYLMKD…IKKHDPKYNV (78 aa)) is the GIY-YIG domain. Residues 196–231 (KEVKVELEKKMHKAAEELNFERAKELRDTLGYMEAV) form the UVR domain.

Belongs to the UvrC family. Interacts with UvrB in an incision complex.

The protein resides in the cytoplasm. In terms of biological role, the UvrABC repair system catalyzes the recognition and processing of DNA lesions. UvrC both incises the 5' and 3' sides of the lesion. The N-terminal half is responsible for the 3' incision and the C-terminal half is responsible for the 5' incision. This Halalkalibacterium halodurans (strain ATCC BAA-125 / DSM 18197 / FERM 7344 / JCM 9153 / C-125) (Bacillus halodurans) protein is UvrABC system protein C.